The chain runs to 139 residues: Ribonuclease P protein component (139 aa).

The interval 116-139 (FSKNKSTIGGEYSPKNEQCESELP) is disordered.

The protein belongs to the RnpA family. Consists of a catalytic RNA component (M1 or rnpB) and a protein subunit.

It catalyses the reaction Endonucleolytic cleavage of RNA, removing 5'-extranucleotides from tRNA precursor.. RNaseP catalyzes the removal of the 5'-leader sequence from pre-tRNA to produce the mature 5'-terminus. It can also cleave other RNA substrates such as 4.5S RNA. The protein component plays an auxiliary but essential role in vivo by binding to the 5'-leader sequence and broadening the substrate specificity of the ribozyme. The chain is Ribonuclease P protein component from Chlamydia abortus (strain DSM 27085 / S26/3) (Chlamydophila abortus).